Consider the following 176-residue polypeptide: Cytochrome b (176 aa).

Helical transmembrane passes span 33-53 (FGSLLGVCLMMQILTGLFLAM), 77-98 (WLLRYLHANGASMFFICLYLHI), and 113-133 (WNVGIILLFAVMATAFMGYVL). The heme b site is built by histidine 83 and histidine 97.

It belongs to the cytochrome b family. As to quaternary structure, the cytochrome bc1 complex contains 11 subunits: 3 respiratory subunits (MT-CYB, CYC1 and UQCRFS1), 2 core proteins (UQCRC1 and UQCRC2) and 6 low-molecular weight proteins (UQCRH/QCR6, UQCRB/QCR7, UQCRQ/QCR8, UQCR10/QCR9, UQCR11/QCR10 and a cleavage product of UQCRFS1). This cytochrome bc1 complex then forms a dimer. Requires heme b as cofactor.

The protein localises to the mitochondrion inner membrane. Functionally, component of the ubiquinol-cytochrome c reductase complex (complex III or cytochrome b-c1 complex) that is part of the mitochondrial respiratory chain. The b-c1 complex mediates electron transfer from ubiquinol to cytochrome c. Contributes to the generation of a proton gradient across the mitochondrial membrane that is then used for ATP synthesis. This is Cytochrome b (MT-CYB) from Promops centralis (Big crested mastiff bat).